The following is a 46-amino-acid chain: Antimicrobial peptide eNAP-2 (46 aa).

Positions 12-46 constitute a WAP domain; sequence RPGRCPTVPPGTFGHCACLCTGDASEPKGQKCCSN.

Functionally, has antibiotic activity against several equine uterine pathogens; S.zooepidemicus, E.coli and P.aeruginosa. Highly efficient against S.zoopedemicus. Not active against K.pneumoniae. Selectively inactivates microbial serine proteases (subtilisin A and proteinase K) without inhibiting mammalian serine proteases (human neutrophil elastase, human cathepsin G and bovine pancreatic trypsin). The chain is Antimicrobial peptide eNAP-2 from Equus caballus (Horse).